The following is a 948-amino-acid chain: Zinc finger CCCH domain-containing protein 18 (948 aa).

Methionine 1 is subject to N-acetylmethionine. The segment at 1–219 (MDVAESPELD…SDRKVRPRPT (219 aa)) is disordered. The residue at position 6 (serine 6) is a Phosphoserine. Positions 15-25 (EDEEQPALSDD) are enriched in acidic residues. Phosphoserine occurs at positions 33, 45, 58, 64, 71, 75, 80, and 92. Over residues 70–86 (ASEPKSQDQDSEAHELS) the composition is skewed to basic and acidic residues. A compositionally biased stretch (acidic residues) spans 95–105 (EEGDDVEEDGT). At threonine 105 the chain carries Phosphothreonine. Phosphoserine occurs at positions 106 and 114. Positions 106–120 (SDLRDEASSVTRELD) are enriched in basic and acidic residues. Composition is skewed to acidic residues over residues 121-132 (EHELDYDEEVPE) and 139-154 (QEEE…EEEK). At serine 169 the chain carries Phosphoserine. Residues 177–186 (EAAKEKKKED) are compositionally biased toward basic and acidic residues. Acidic residues predominate over residues 187–203 (DDGEIDDGEIDDDDLEE). Basic and acidic residues predominate over residues 204 to 213 (GEVKDPSDRK). The C3H1-type zinc finger occupies 215–241 (RPRPTCRFFMKGNCTWGMSCRFIHPGV). Omega-N-methylarginine is present on glycine 245. 2 disordered regions span residues 272–296 (ANPW…TESA) and 388–922 (YTEA…TLSR). A compositionally biased stretch (basic and acidic residues) spans 392 to 480 (EPYHNYRERE…DREKDKEKPK (89 aa)). Positions 395–460 (HNYRERERER…RERAKRDEKD (66 aa)) form a coiled coil. Serine 483 carries the post-translational modification Phosphoserine. Lysine 506 participates in a covalent cross-link: Glycyl lysine isopeptide (Lys-Gly) (interchain with G-Cter in SUMO2). Positions 506-516 (KRADEWKDPWR) are enriched in basic and acidic residues. A phosphoserine mark is found at serine 528, serine 530, and serine 532. The span at 541–602 (SASSASASNS…SRSRSFSSSP (62 aa)) shows a compositional bias: low complexity. Residues 603-612 (SPSPTPSPHR) show a composition bias toward pro residues. Residues lysine 618 and lysine 657 each participate in a glycyl lysine isopeptide (Lys-Gly) (interchain with G-Cter in SUMO2) cross-link. The segment covering 657–666 (KPGDLREARR) has biased composition (basic and acidic residues). Composition is skewed to low complexity over residues 688 to 721 (GSSY…SVHS) and 732 to 746 (ASPV…PTPA). Positions 756–770 (KKEDGVREEKRRRDP) are enriched in basic and acidic residues. The segment covering 774-804 (PPKSSKAPAGGKASQQAAAPQPAVPGQPQQG) has biased composition (low complexity). Lysine 810 carries the post-translational modification N6-acetyllysine. Residue lysine 813 forms a Glycyl lysine isopeptide (Lys-Gly) (interchain with G-Cter in SUMO2) linkage. Residues 820 to 837 (AADKGSRKRYEPSDKDRQ) show a composition bias toward basic and acidic residues. Residues serine 838, serine 847, serine 863, serine 888, and serine 891 each carry the phosphoserine modification. The segment covering 888 to 898 (SPQSKGSSKVT) has biased composition (polar residues). Residues 902–919 (GKATDTATAGTKSGKAST) are compositionally biased toward low complexity. Lysine 903 is covalently cross-linked (Glycyl lysine isopeptide (Lys-Gly) (interchain with G-Cter in SUMO2)). Residues 916–945 (KASTLSRREELLKQLKAVEDAIARKRAKIP) are a coiled coil.

Interacts with ZFC3H1 in a RNase-insensitive manner.

Its subcellular location is the nucleus. The sequence is that of Zinc finger CCCH domain-containing protein 18 (Zc3h18) from Mus musculus (Mouse).